A 160-amino-acid polypeptide reads, in one-letter code: Globin CTT-II beta (160 aa).

The signal sequence occupies residues 1–15 (MKFLVLALCIAAAVA). Residues 17-160 (PLSADEASLV…NVFNMMFSYL (144 aa)) form the Globin domain. Heme b is bound by residues His-75 and His-110.

This sequence belongs to the globin family. In terms of assembly, homodimer.

In Chironomus thummi thummi (Midge), this protein is Globin CTT-II beta.